A 418-amino-acid polypeptide reads, in one-letter code: Dual-specificity RNA methyltransferase RlmN (418 aa).

A disordered region spans residues 1–21 (MADTSLMPIPGQVDPVPAPRD). Residue glutamate 122 is the Proton acceptor of the active site. Residues 128–383 (DADRGTLCVS…APVRTPRGRD (256 aa)) enclose the Radical SAM core domain. Cysteine 135 and cysteine 388 are disulfide-bonded. [4Fe-4S] cluster-binding residues include cysteine 142, cysteine 146, and cysteine 149. Residues 212 to 213 (GE), serine 244, 266 to 268 (SLH), and asparagine 345 contribute to the S-adenosyl-L-methionine site. The active-site S-methylcysteine intermediate is the cysteine 388. A disordered region spans residues 393–418 (TAAQKKSRAERDREAAAEAEAAASQA). The segment covering 399–408 (SRAERDREAA) has biased composition (basic and acidic residues).

Belongs to the radical SAM superfamily. RlmN family. It depends on [4Fe-4S] cluster as a cofactor.

Its subcellular location is the cytoplasm. It carries out the reaction adenosine(2503) in 23S rRNA + 2 reduced [2Fe-2S]-[ferredoxin] + 2 S-adenosyl-L-methionine = 2-methyladenosine(2503) in 23S rRNA + 5'-deoxyadenosine + L-methionine + 2 oxidized [2Fe-2S]-[ferredoxin] + S-adenosyl-L-homocysteine. The enzyme catalyses adenosine(37) in tRNA + 2 reduced [2Fe-2S]-[ferredoxin] + 2 S-adenosyl-L-methionine = 2-methyladenosine(37) in tRNA + 5'-deoxyadenosine + L-methionine + 2 oxidized [2Fe-2S]-[ferredoxin] + S-adenosyl-L-homocysteine. Specifically methylates position 2 of adenine 2503 in 23S rRNA and position 2 of adenine 37 in tRNAs. m2A2503 modification seems to play a crucial role in the proofreading step occurring at the peptidyl transferase center and thus would serve to optimize ribosomal fidelity. The chain is Dual-specificity RNA methyltransferase RlmN from Erythrobacter litoralis (strain HTCC2594).